Reading from the N-terminus, the 577-residue chain is Arginine--tRNA ligase (577 aa).

A 'HIGH' region motif is present at residues Pro122–His132.

This sequence belongs to the class-I aminoacyl-tRNA synthetase family. As to quaternary structure, monomer.

The protein localises to the cytoplasm. The catalysed reaction is tRNA(Arg) + L-arginine + ATP = L-arginyl-tRNA(Arg) + AMP + diphosphate. The polypeptide is Arginine--tRNA ligase (Aliivibrio fischeri (strain ATCC 700601 / ES114) (Vibrio fischeri)).